Here is a 147-residue protein sequence, read N- to C-terminus: Protein SprT-like (147 aa).

Residues 5 to 142 (DYVNEVSLED…SFCRGHLKEI (138 aa)) enclose the SprT-like domain. Histidine 64 contacts Zn(2+). Glutamate 65 is a catalytic residue. Position 68 (histidine 68) interacts with Zn(2+).

This sequence belongs to the SprT family. The cofactor is Zn(2+).

Its subcellular location is the cytoplasm. This chain is Protein SprT-like, found in Streptococcus uberis (strain ATCC BAA-854 / 0140J).